Consider the following 74-residue polypeptide: Conotoxin SIIID (74 aa).

A signal peptide spans 1–20; sequence MMSKLGVLLTVCLLLFPLTA. Residues 21–53 constitute a propeptide that is removed on maturation; the sequence is LPLDGDQPADQLEDRMQDDISSEQYPSFVRRQK. 3 cysteine pairs are disulfide-bonded: Cys-54–Cys-71, Cys-55–Cys-73, and Cys-61–Cys-74.

Belongs to the conotoxin M superfamily. In terms of processing, three disulfide isomers have been synthesized and tested. SIIID with the disulfide pairing 1-4;2-5;3-6 is the most active. Expressed by the venom duct.

The protein resides in the secreted. Its function is as follows. The short synthetic peptide SIIID (range 54-74, with disulfide pairing 1-4, 2-5 and 3-6) reversibly inhibits human alpha-7/CHRNA7 acetylcholine receptor (IC(50)=880 nM). Shows a paralytic effect in fish. The polypeptide is Conotoxin SIIID (Conus striatus (Striated cone)).